A 513-amino-acid polypeptide reads, in one-letter code: GMP synthase [glutamine-hydrolyzing] (513 aa).

One can recognise a Glutamine amidotransferase type-1 domain in the interval 9-198; sequence MILVLDFGSQ…VRRICDCTGE (190 aa). The active-site Nucleophile is Cys-86. Catalysis depends on residues His-172 and Glu-174. The region spanning 199-388 is the GMPS ATP-PPase domain; that stretch reads WTMENFIDLE…LGIPEHLVWR (190 aa). Residue 226–232 participates in ATP binding; it reads SGGVDSS.

In terms of assembly, homodimer.

The catalysed reaction is XMP + L-glutamine + ATP + H2O = GMP + L-glutamate + AMP + diphosphate + 2 H(+). Its pathway is purine metabolism; GMP biosynthesis; GMP from XMP (L-Gln route): step 1/1. In terms of biological role, catalyzes the synthesis of GMP from XMP. This is GMP synthase [glutamine-hydrolyzing] from Staphylococcus carnosus (strain TM300).